Reading from the N-terminus, the 221-residue chain is Chalcone--flavanone isomerase 2 (221 aa).

Substrate is bound by residues T50, N115, and S192.

The protein belongs to the chalcone isomerase family.

The catalysed reaction is a chalcone = a flavanone.. The protein operates within secondary metabolite biosynthesis; flavonoid biosynthesis. Catalyzes the intramolecular cyclization of bicyclic chalcones into tricyclic (S)-flavanones. Responsible for the isomerization of 4,2',4',6'-tetrahydroxychalcone (also termed chalcone) into naringenin. The protein is Chalcone--flavanone isomerase 2 (CHI2) of Lotus japonicus (Lotus corniculatus var. japonicus).